The following is a 360-amino-acid chain: DNA replication and repair protein RecF (360 aa).

30 to 37 (GANGSGKT) is an ATP binding site.

This sequence belongs to the RecF family.

It localises to the cytoplasm. The RecF protein is involved in DNA metabolism; it is required for DNA replication and normal SOS inducibility. RecF binds preferentially to single-stranded, linear DNA. It also seems to bind ATP. The sequence is that of DNA replication and repair protein RecF from Acinetobacter baumannii (strain AB307-0294).